The primary structure comprises 125 residues: Large ribosomal subunit protein bL12 (125 aa).

The protein belongs to the bacterial ribosomal protein bL12 family. As to quaternary structure, homodimer. Part of the ribosomal stalk of the 50S ribosomal subunit. Forms a multimeric L10(L12)X complex, where L10 forms an elongated spine to which 2 to 4 L12 dimers bind in a sequential fashion. Binds GTP-bound translation factors.

Its function is as follows. Forms part of the ribosomal stalk which helps the ribosome interact with GTP-bound translation factors. Is thus essential for accurate translation. This is Large ribosomal subunit protein bL12 from Helicobacter acinonychis (strain Sheeba).